Consider the following 623-residue polypeptide: Cell pattern formation-associated protein stuA (623 aa).

The segment covering 13–31 has biased composition (polar residues); the sequence is QHMQSAGQPQQPQTVTSGP. Residues 13-111 form a disordered region; the sequence is QHMQSAGQPQ…DTTGQHPPPG (99 aa). The HTH APSES-type domain maps to 115–221; sequence RVTATLWEDE…HNIGALLYHP (107 aa). The segment at residues 149–170 is a DNA-binding region (H-T-H motif); that stretch reads GTKLLNVAGMTRGRRDGILKSE. Disordered stretches follow at residues 232-270 and 332-623; these read AAAE…PQSS and ARSM…PRQR. Residues 335 to 374 show a composition bias toward polar residues; sequence MPTTPATTPPGSMQPYGSAQSFDGSRQQMYNAPSQQSPYP. A compositionally biased stretch (low complexity) spans 396-408; the sequence is GPPSSRPSGSAPS. The segment covering 423-446 has biased composition (basic and acidic residues); it reads EHGHQSHAGEEDGEHEQHDAEYTH. The span at 542-553 shows a compositional bias: low complexity; that stretch reads APPADMANPMPN. The nuclear localization domain stretch occupies residues 569–594; it reads KRGREGDDDLSRPVGDVPGMDMKRRK. Residues 570 to 579 show a composition bias toward basic and acidic residues; that stretch reads RGREGDDDLS.

The protein belongs to the EFG1/PHD1/stuA family.

Its subcellular location is the nucleus. Functionally, transcription factor that regulates asexual reproduction. Binds the StuA-response elements (StRE) with the consensus sequence 5'-(A/T)CGCG(T/A)N(A/C)-3' at the promoters of target genes. Controls conidiation by positively regulating the expression of brlA and abaA. Positively regulates the cephalosporin biosynthesis gene cluster. Also involved hyphal fragmentation and cell wall integrity. The protein is Cell pattern formation-associated protein stuA of Hapsidospora chrysogenum (strain ATCC 11550 / CBS 779.69 / DSM 880 / IAM 14645 / JCM 23072 / IMI 49137) (Acremonium chrysogenum).